A 131-amino-acid chain; its full sequence is Profilin-9 (131 aa).

Cys-13 and Cys-115 are joined by a disulfide. An Involved in PIP2 interaction motif is present at residues 81-97 (AVTRGKKGAGGITIKKT). Thr-111 is modified (phosphothreonine).

Belongs to the profilin family. As to quaternary structure, occurs in many kinds of cells as a complex with monomeric actin in a 1:1 ratio. Post-translationally, phosphorylated by MAP kinases.

The protein resides in the cytoplasm. It localises to the cytoskeleton. Functionally, binds to actin and affects the structure of the cytoskeleton. At high concentrations, profilin prevents the polymerization of actin, whereas it enhances it at low concentrations. The sequence is that of Profilin-9 from Phleum pratense (Common timothy).